Reading from the N-terminus, the 172-residue chain is Myosin regulatory light chain (172 aa).

Position 17 is a phosphothreonine (threonine 17). Phosphoserine is present on serine 18. EF-hand domains follow at residues 27–62 (AQIQEFKEAFNMIDQNRDGFIDQEDLKDMFASLGKE), 98–133 (DPEEVIRNAFQCFDEDNSGKLNEEHLRELLTTMGER), and 134–168 (YSEEQVDELFRDAPIKGGQFDYVEFTRMLKHGTKD). 4 residues coordinate Ca(2+): aspartate 40, asparagine 42, aspartate 44, and aspartate 51.

In terms of assembly, myosin is a hexamer of 2 heavy chains and 4 light chains (two regulatory light chains and two essential light chains). In terms of processing, may be phosphorylated by let-502 or/and pak-1 and dephosphorylated by mel-11 to regulate its activation and myosin II-mediated contraction. Expressed in the spermathecal and uterine walls. Weak expression in gonadal sheath and intestinal muscle. Not detected in vulval, pharyngeal or body wall muscles.

It localises to the cytoplasm. It is found in the cytoskeleton. Its function is as follows. Regulates myosin II activity and organization during embryo elongation. May be involved in the organization of mlc-5 into bundles. Required maternally for cytokinesis during meiosis and mitosis in the early embryo and for the establishment of embryonic anterior-posterior polarity. This chain is Myosin regulatory light chain, found in Caenorhabditis elegans.